Reading from the N-terminus, the 143-residue chain is MSRNRLFLVAGSLAVAAAVSLISGITLLNRDVGSYIASHYRQESRDVNGTRYLCTGSPKQVATTLVKYQTPAARASHTDTEYLRYRNNIVTVGPDGTYPCIIRVENLSAGYNHGAYVFLGPGFTPGSPSGGSGGSPGGPGGSK.

The first 16 residues, 1–16 (MSRNRLFLVAGSLAVA), serve as a signal peptide directing secretion. Residues 114-134 (GAYVFLGPGFTPGSPSGGSGG) traverse the membrane as a helical segment.

It is found in the membrane. This is an uncharacterized protein from Mycobacterium tuberculosis (strain CDC 1551 / Oshkosh).